The following is a 932-amino-acid chain: UPF0182 protein Amet_0022 (932 aa).

7 consecutive transmembrane segments (helical) span residues valine 14–leucine 34, leucine 60–glycine 80, isoleucine 104–leucine 124, threonine 166–isoleucine 186, leucine 208–alanine 228, valine 256–valine 276, and leucine 286–leucine 306.

It belongs to the UPF0182 family.

It localises to the cell membrane. This chain is UPF0182 protein Amet_0022, found in Alkaliphilus metalliredigens (strain QYMF).